The chain runs to 504 residues: ATP synthase subunit alpha (504 aa).

ATP is bound at residue 171–178 (GDRQTGKT).

The protein belongs to the ATPase alpha/beta chains family. As to quaternary structure, F-type ATPases have 2 components, CF(1) - the catalytic core - and CF(0) - the membrane proton channel. CF(1) has five subunits: alpha(3), beta(3), gamma(1), delta(1), epsilon(1). CF(0) has three main subunits: a(1), b(2) and c(9-12). The alpha and beta chains form an alternating ring which encloses part of the gamma chain. CF(1) is attached to CF(0) by a central stalk formed by the gamma and epsilon chains, while a peripheral stalk is formed by the delta and b chains.

Its subcellular location is the cell inner membrane. The enzyme catalyses ATP + H2O + 4 H(+)(in) = ADP + phosphate + 5 H(+)(out). Produces ATP from ADP in the presence of a proton gradient across the membrane. The alpha chain is a regulatory subunit. The sequence is that of ATP synthase subunit alpha from Sulfurovum sp. (strain NBC37-1).